Here is a 456-residue protein sequence, read N- to C-terminus: Probable mannan endo-1,4-beta-mannosidase F (456 aa).

Residues 1-18 form the signal peptide; that stretch reads MRPLSSAALLSAIGAVAA. The 36-residue stretch at 19 to 54 folds into the CBM1 domain; sequence QVGPWGQCGGQSYTGGTSCVSGWACVFLNDWYSQCQ. The interval 79 to 110 is disordered; that stretch reads STSVSATAPPSSTSSSTASVSSSTSSTPIPTS. The interval 79-113 is ser-rich linker; the sequence is STSVSATAPPSSTSSSTASVSSSTSSTPIPTSSGS. The catalytic stretch occupies residues 114–456; sequence FVKAEGLKFN…CAVIDHVSRI (343 aa). Residues Trp166 and Asn280 each contribute to the substrate site. Glu281 acts as the Proton donor in catalysis. A substrate-binding site is contributed by Tyr356. Glu390 (nucleophile) is an active-site residue. Trp420 is a substrate binding site.

Belongs to the glycosyl hydrolase 5 (cellulase A) family.

It is found in the secreted. It catalyses the reaction Random hydrolysis of (1-&gt;4)-beta-D-mannosidic linkages in mannans, galactomannans and glucomannans.. Functionally, endo-1,4-mannanase, a crucial enzyme for depolymerization of seed galactomannans and wood galactoglucomannans. The protein is Probable mannan endo-1,4-beta-mannosidase F (manF) of Neosartorya fischeri (strain ATCC 1020 / DSM 3700 / CBS 544.65 / FGSC A1164 / JCM 1740 / NRRL 181 / WB 181) (Aspergillus fischerianus).